Consider the following 392-residue polypeptide: Extracellular metalloproteinase 4 (392 aa).

Positions 1-9 (VHSVVDYVS) are excised as a propeptide. 2 N-linked (GlcNAc...) asparagine glycosylation sites follow: N27 and N176. Position 193 (H193) interacts with Zn(2+). E194 is a catalytic residue. A Zn(2+)-binding site is contributed by H197. N-linked (GlcNAc...) asparagine glycosylation is found at N359 and N385.

This sequence belongs to the peptidase M36 family. The cofactor is Zn(2+).

It is found in the secreted. Its function is as follows. Secreted metalloproteinase probably acting as a virulence factor. The polypeptide is Extracellular metalloproteinase 4 (MEP4) (Trichophyton violaceum).